Reading from the N-terminus, the 281-residue chain is Bis(5'-nucleosyl)-tetraphosphatase, symmetrical (281 aa).

This sequence belongs to the Ap4A hydrolase family.

It catalyses the reaction P(1),P(4)-bis(5'-adenosyl) tetraphosphate + H2O = 2 ADP + 2 H(+). In terms of biological role, hydrolyzes diadenosine 5',5'''-P1,P4-tetraphosphate to yield ADP. The sequence is that of Bis(5'-nucleosyl)-tetraphosphatase, symmetrical from Pectobacterium carotovorum subsp. carotovorum (strain PC1).